The following is a 648-amino-acid chain: Cysteine-rich receptor-like protein kinase 38 (648 aa).

The first 25 residues, 1–25 (MKNSAAIFLTSSLILLLQTLHGVKA), serve as a signal peptide directing secretion. 2 Gnk2-homologous domains span residues 26 to 127 (GFIC…DQST) and 140 to 247 (PSPV…FYPF). Residues 26-278 (GFICVGSSFP…EAISITRLKG (253 aa)) lie on the Extracellular side of the membrane. N-linked (GlcNAc...) asparagine glycosylation is found at Asn37, Asn63, Asn151, Asn174, and Asn253. Residues 279–299 (GIIAIFVVPIVINLLVFIGLI) form a helical membrane-spanning segment. Residues 300-648 (RAYTRIRKSY…ELSITELSPR (349 aa)) are Cytoplasmic-facing. In terms of domain architecture, Protein kinase spans 339 to 611 (FSFENKIGQG…VIQWLGSETI (273 aa)). Residues 345 to 353 (IGQGGFGSV) and Lys367 each bind ATP. Position 412 is a phosphotyrosine (Tyr412). Asp464 acts as the Proton acceptor in catalysis. Ser468 carries the phosphoserine modification. A Phosphothreonine modification is found at Thr504. Phosphotyrosine is present on Tyr512.

Belongs to the protein kinase superfamily. Ser/Thr protein kinase family. CRK subfamily.

The protein resides in the membrane. It catalyses the reaction L-seryl-[protein] + ATP = O-phospho-L-seryl-[protein] + ADP + H(+). The enzyme catalyses L-threonyl-[protein] + ATP = O-phospho-L-threonyl-[protein] + ADP + H(+). The sequence is that of Cysteine-rich receptor-like protein kinase 38 (CRK38) from Arabidopsis thaliana (Mouse-ear cress).